The sequence spans 780 residues: ATP-dependent 6-phosphofructokinase, muscle type (780 aa).

An N-acetylthreonine modification is found at T2. The tract at residues 2–390 (THEEHHAAKT…NWEVYKLLAH (389 aa)) is N-terminal catalytic PFK domain 1. Residues G25, 88–89 (RC), and 118–121 (GDGS) contribute to the ATP site. D119 contacts Mg(2+). Position 133 is a phosphoserine (S133). Residues 164 to 166 (SID), R201, 208 to 210 (MGR), E264, R292, and 298 to 301 (HVQR) contribute to the substrate site. Residue D166 is the Proton acceptor of the active site. S377 is modified (phosphoserine). Residues 391–401 (IRPPVSKSGSH) form an interdomain linker region. The segment at 402 to 780 (TVAVMNVGAP…SRKRSGEAPA (379 aa)) is C-terminal regulatory PFK domain 2. Beta-D-fructose 2,6-bisphosphate-binding positions include R471 and 528-532 (TVSNN). S530 is a glycosylation site (O-linked (GlcNAc) serine). K557 is subject to N6-(2-hydroxyisobutyryl)lysine. Beta-D-fructose 2,6-bisphosphate contacts are provided by residues R566, 573-575 (MGG), E629, R655, and 661-664 (HMQQ). Position 667 is a phosphoserine (S667). Residue R735 coordinates beta-D-fructose 2,6-bisphosphate. S775 carries the post-translational modification Phosphoserine.

Belongs to the phosphofructokinase type A (PFKA) family. ATP-dependent PFK group I subfamily. Eukaryotic two domain clade 'E' sub-subfamily. In terms of assembly, homo- and heterotetramers. Phosphofructokinase (PFK) enzyme functions as a tetramer composed of different combinations of 3 types of subunits, called PFKM (M), PFKL (L) and PFKP (P). The composition of the PFK tetramer differs according to the tissue type it is present in. The kinetic and regulatory properties of the tetrameric enzyme are dependent on the subunit composition, hence can vary across tissues. Interacts (via C-terminus) with HK1 (via N-terminal spermatogenic cell-specific region). Mg(2+) serves as cofactor. In terms of processing, glcNAcylation decreases enzyme activity.

The protein localises to the cytoplasm. It catalyses the reaction beta-D-fructose 6-phosphate + ATP = beta-D-fructose 1,6-bisphosphate + ADP + H(+). The protein operates within carbohydrate degradation; glycolysis; D-glyceraldehyde 3-phosphate and glycerone phosphate from D-glucose: step 3/4. With respect to regulation, allosterically activated by ADP, AMP, or fructose 2,6-bisphosphate, and allosterically inhibited by ATP or citrate. Catalyzes the phosphorylation of D-fructose 6-phosphate to fructose 1,6-bisphosphate by ATP, the first committing step of glycolysis. In Equus caballus (Horse), this protein is ATP-dependent 6-phosphofructokinase, muscle type (PFKM).